A 288-amino-acid chain; its full sequence is Bifunctional protein FolD (288 aa).

Residues 166–168, serine 191, and isoleucine 232 each bind NADP(+); that span reads GRS.

This sequence belongs to the tetrahydrofolate dehydrogenase/cyclohydrolase family. Homodimer.

It carries out the reaction (6R)-5,10-methylene-5,6,7,8-tetrahydrofolate + NADP(+) = (6R)-5,10-methenyltetrahydrofolate + NADPH. The enzyme catalyses (6R)-5,10-methenyltetrahydrofolate + H2O = (6R)-10-formyltetrahydrofolate + H(+). Its pathway is one-carbon metabolism; tetrahydrofolate interconversion. Its function is as follows. Catalyzes the oxidation of 5,10-methylenetetrahydrofolate to 5,10-methenyltetrahydrofolate and then the hydrolysis of 5,10-methenyltetrahydrofolate to 10-formyltetrahydrofolate. The sequence is that of Bifunctional protein FolD from Rickettsia peacockii (strain Rustic).